Here is a 370-residue protein sequence, read N- to C-terminus: UPF0284 protein PCC7424_2681 (370 aa).

It belongs to the UPF0284 family.

The chain is UPF0284 protein PCC7424_2681 from Gloeothece citriformis (strain PCC 7424) (Cyanothece sp. (strain PCC 7424)).